Here is a 95-residue protein sequence, read N- to C-terminus: Small ribosomal subunit protein bS18 (95 aa).

It belongs to the bacterial ribosomal protein bS18 family. In terms of assembly, part of the 30S ribosomal subunit. Forms a tight heterodimer with protein bS6.

Binds as a heterodimer with protein bS6 to the central domain of the 16S rRNA, where it helps stabilize the platform of the 30S subunit. In Ehrlichia ruminantium (strain Gardel), this protein is Small ribosomal subunit protein bS18.